Here is a 453-residue protein sequence, read N- to C-terminus: Allantoinase (453 aa).

Histidine 59, histidine 61, lysine 146, histidine 186, histidine 242, and aspartate 315 together coordinate Zn(2+). An N6-carboxylysine modification is found at lysine 146.

Belongs to the metallo-dependent hydrolases superfamily. Allantoinase family. Homotetramer. Zn(2+) serves as cofactor. In terms of processing, carboxylation allows a single lysine to coordinate two zinc ions.

The catalysed reaction is (S)-allantoin + H2O = allantoate + H(+). The protein operates within nitrogen metabolism; (S)-allantoin degradation; allantoate from (S)-allantoin: step 1/1. Catalyzes the conversion of allantoin (5-ureidohydantoin) to allantoic acid by hydrolytic cleavage of the five-member hydantoin ring. This chain is Allantoinase, found in Salmonella gallinarum (strain 287/91 / NCTC 13346).